The following is a 103-amino-acid chain: MYAVIKTGGKQYRVSAGDKLKIEKLEAEVGSEITFDQVLMVGDGADIKMGAPLLRGATVSATVLNQARGDKIKIFKMRRRKHYRKSQGHRQYFTEVQIGGITA.

Belongs to the bacterial ribosomal protein bL21 family. In terms of assembly, part of the 50S ribosomal subunit. Contacts protein L20.

This protein binds to 23S rRNA in the presence of protein L20. This is Large ribosomal subunit protein bL21 from Thiobacillus denitrificans (strain ATCC 25259 / T1).